A 208-amino-acid chain; its full sequence is Small ribosomal subunit protein uS4 (208 aa).

An S4 RNA-binding domain is found at 98 to 160 (RRLDNVVYRM…SKNNVQIQRA (63 aa)).

Belongs to the universal ribosomal protein uS4 family. As to quaternary structure, part of the 30S ribosomal subunit. Contacts protein S5. The interaction surface between S4 and S5 is involved in control of translational fidelity.

Functionally, one of the primary rRNA binding proteins, it binds directly to 16S rRNA where it nucleates assembly of the body of the 30S subunit. In terms of biological role, with S5 and S12 plays an important role in translational accuracy. The chain is Small ribosomal subunit protein uS4 from Nautilia profundicola (strain ATCC BAA-1463 / DSM 18972 / AmH).